Reading from the N-terminus, the 882-residue chain is DNA mismatch repair protein MutS (882 aa).

626-633 (GPNMAGKS) lines the ATP pocket.

The protein belongs to the DNA mismatch repair MutS family.

Its function is as follows. This protein is involved in the repair of mismatches in DNA. It is possible that it carries out the mismatch recognition step. This protein has a weak ATPase activity. This Anaeromyxobacter sp. (strain Fw109-5) protein is DNA mismatch repair protein MutS.